The chain runs to 453 residues: Verruculogen prenyltransferase (453 aa).

Glutamate 89 is a binding site for substrate. Dimethylallyl diphosphate-binding residues include arginine 102, lysine 194, tyrosine 196, lysine 273, tyrosine 275, tyrosine 378, tyrosine 443, and tyrosine 447.

This sequence belongs to the tryptophan dimethylallyltransferase family.

It carries out the reaction verruculogen + dimethylallyl diphosphate = fumitremorgin A + diphosphate. Its pathway is mycotoxin biosynthesis. Its function is as follows. Verruculogen prenyltransferase; part of the gene cluster that mediates the biosynthesis of fumitremorgins, indole alkaloids that carry not only intriguing chemical structures, but also interesting biological and pharmacological activities. The biosynthesis of fumitremorgin-type alkaloids begins by condensation of the two amino acids L-tryptophan and L-proline to brevianamide F, catalyzed by the non-ribosomal peptide synthetase ftmPS/ftmA. Brevianamide F is then prenylated by the prenyltransferase ftmPT1/ftmB in the presence of dimethylallyl diphosphate, resulting in the formation of tryprostatin B. The three cytochrome P450 monooxygenases, ftmP450-1/ftmC, ftmP450-2/ftmE and ftmP450-3/FtmG, are responsible for the conversion of tryprostatin B to 6-hydroxytryprostatin B, tryprostatin A to fumitremorgin C and fumitremorgin C to 12,13-dihydroxyfumitremorgin C, respectively. The putative methyltransferase ftmMT/ftmD is expected for the conversion of 6-hydroxytryprostatin B to tryprostatin A. FtmPT2/FtmH catalyzes the prenylation of 12,13-dihydroxyfumitre-morgin C in the presence of dimethylallyl diphosphate, resulting in the formation of fumitremorgin B. Fumitremorgin B is further converted to verruculogen by ftmOx1/ftmF via the insertion of an endoperoxide bond between the two prenyl moieties. Finally, verruculogen is further converted to fumitremorgin A by the verruculogen prenyltransferase ftmPT3. The chain is Verruculogen prenyltransferase from Neosartorya fischeri (strain ATCC 1020 / DSM 3700 / CBS 544.65 / FGSC A1164 / JCM 1740 / NRRL 181 / WB 181) (Aspergillus fischerianus).